The following is a 367-amino-acid chain: UDP-D-xylose:L-fucose alpha-1,3-D-xylosyltransferase (367 aa).

The span at 1 to 10 (MAQKQQTLHQ) shows a compositional bias: polar residues. Residues 1–21 (MAQKQQTLHQQRPFSSSPRSY) are disordered. Residues 1-35 (MAQKQQTLHQQRPFSSSPRSYSSISNRPIFLLSRN) are Cytoplasmic-facing. Residues 12 to 21 (RPFSSSPRSY) show a composition bias toward low complexity. Residues 36–56 (GLLLVLLALFLLLGVFLPWPG) traverse the membrane as a helical; Signal-anchor for type II membrane protein segment. At 57–367 (SPLLLFPNKV…ALESPLGKLQ (311 aa)) the chain is on the lumenal side. N-linked (GlcNAc...) asparagine glycosylation is found at asparagine 85, asparagine 98, and asparagine 173. A DXD motif motif is present at residues 196–198 (DVD). 2 N-linked (GlcNAc...) asparagine glycosylation sites follow: asparagine 228 and asparagine 292.

Belongs to the glycosyltransferase 77 family. It depends on Mn(2+) as a cofactor. The cofactor is Mg(2+). Post-translationally, glycosylated. As to expression, expressed in roots, rosette leaves, stems and flowers.

The protein localises to the golgi apparatus membrane. Functionally, catalyzes the transfer of D-xylose from UDP-alpha-D-xylose onto L-fucose. Probably involved in the biosynthesis of rhamnogalacturonan II (RG-II) through xylosylation of the internal fucose moiety of the A-chain of RG-II, a structurally complex pectic polysaccharide of the primary cell wall. RG-II is essential for the cell wall integrity of rapidly growing tissues such as roots and pollen tube growth and elongation. The polypeptide is UDP-D-xylose:L-fucose alpha-1,3-D-xylosyltransferase (Arabidopsis thaliana (Mouse-ear cress)).